The following is a 2543-amino-acid chain: MHHPFGKEETASQKQLFGFFCECLRRGEWELAQACVPQLHEAQGDIPKKVEDILQALVVCPDQLRCGQDIDPQRLAWVWFLVLEKWFSQEKKLLPSVFRRKLEFLLLSEDLRRDIPEDILKELYEALAQDTGGPVLDGNQKRESWTPRLSSEAVSVFWDLLRQAPQLAQALLELLRTKDDSAGLSGWSLQKALVDRVRRALGAVQGPTTGPAGIVDAIYGALRSLRCPAEPLGGELRLLCEELLEACRAEGSPLQEEQVLSCLLHKAGRSLVSLYGHIYAEKATEKPAKAVHLGKVSPDHLDPEQAMLALFCNPDPSQAWKSAYFYCLSNSKHFLEQILVTALALLKEEDFPSLGCLLDREFRPLSRLLVLLGWMHCQSLASAKRLLQTLHRAQDQGCDKLLRDACDGLWAHLEVLEWCVQQSSNPIPKRDLLCHLHGGDSHSVLYSLHHLTNLPALREEDVLKLLQKVPAKDPQQEQDSAEAPVPEHLSRCQNLTLYQSFCAMKYAIYALCVNSHQHSQCQECRDSPSEDPALAAEPANDSLSSPGASDLFSTYLARCQQYLCNVPDSLCLELLENIFSLLLITSADLHPEPHLPEDYAEDEDIEGKGLLGLRSPSESPQHIAQPERKSEQGCQEVPRSLACTVPNCLKTEPKESSPGLHGHSFLDLKHFTSGISGFLADEFAIGAFFRLLQEQLDKLSSHSPPEKPKLPEGQSCSGSRDGLQSRLHRFSKVLSEAQWRYKVVTSNQGSEEQPSRRYWPIATGHPSLRRGRRTRRSRPDGRDRSSNPSLESTSSELSTSTSEGSLNAVSGRNELDGRLQPQSQNSLIPMMFSPPESLLASCILRGNFAEAHQVVFMFNLKSSPSSGELMFMERYQEVIQELSRVEHKIENQNSDGGSSTIRRTGSGRSTLQAIGSAAAAGMVFYSISDVTDKLLSTSGEPIPTLQEDFWISNTLVEPTAPLREVLEDLSPPAMAAFDLACSQCQLWKTCKQLLETAERRLNVSLESRGRRLDHILLSADGIRGFPVVLQQISKILNYPLTSAGQSKSESVEEKGAGPPRCSIAELLQMCWPSLTEDCVASHATLSQQLDQVLQVLREALQRPEPRSTPLSSLVEQAAQKAPEAEAHPVHIQTQLLQKNLGKQTPAGSRQTDYMGTFFSYCNTMAAVLLRSLSSEPDHMEVKVGNPFVLLQQSSSQLVSHLLLERQVPPDRLAALLAREGLSLSVPKVIVNCCCEPLALCSSRQSQQTSSLLTHLDVLVQLHTSHCLEDLPLSTLSSPKPTGNSTLERKPHSSPRDSSLPAFTSSALAFLKSRSKLLATVACLGASQGPKLTKPSLSWKELRGRREVPLSAEQVAQECERLLEQFPMLKASLLAAWEPLRRSTEQGQSLAVSLCGRASLSTVLLGLHSPSALDVLTEAFEEALVARDWSRALQLTEVYGRDVDDLSNIKDAVLSCATACDKEGWRFLFPVKDASLRSRLTLQFVDRWPLEWCLEILAYCISDTAVQGGLKCELQRKLAELRVYQKILGLQATPVWCDWQSLRNCCIEDPSAVMNMILEAKEYGLCEEWGCLYPIPREHLISLHQKHLLHLLERGDHEKALQLLRKIPDPTMCLEVTEQSLDQHPSLAASHFLANYLTTHFYGELTAVRHHEIQALYMGSKVLLTLPEPHRASYSHLSSNPLLMLEQLLMNMKVDWATVAVQTLHQLLAGQEIGFTMDDIDSLLSIYAGKALDFPYSLREKRSDSLTHLQEVSQPSDLVTLSRSPSGEFSVAAAVAAPGVSTIHSPSPRERSFPESQPPPEFVPPATPPGRPQWVPDESASICMVCCRERFTMFNRRHHCRRCGRLVCSACSTKKMVVEGCRESPTRVCDQCYSYYNKDVPEENAGQPEAPDSSKSESPPYSAVVRVPKAAEVEWILDLNEEENELVRSEFYYEQSPSASLCIAILNLHRDSIACGHQLIEHCCRLSQGLTNPEVDAGLLTDIMKQLLFSAKMMFVKAGRSQDLALCDSYISKVDVLNILVAASYRHVPPLDQILQPAAVTRLRNQLLEAEYYQLGVEISTKTGLDPTGAWHAWGMACLKAGNLTAAREKFGRCLKPPFDLNQLSHGSRLVQDVVEYLESTVRPLLSLQDDDYFATLKELEATLRTQSLSLEVIPEGKIMNNTYYQECLFYLHNYSTNLAIISFYMRHSCMREALLHLLNKESPPEVFIEGIFQPSYKSGKLHTLENLLESIDPTLETWGKYLIAACQHLQKKNYYHILYELQQFMKDQVRAAMTCIRFFSHKAKTYTELGEKLSWLLKAKDHLKIYLQDTSRSTRRKKTTFFQKKMTAADVSRHMNTLQLQMEVTRFLHRCESAGTSQITTLPLPTLFGNNHMKMDVACKVMLGGKNVEDGFGIAFRVLQDFQLDAAATYCRAARQLVEREKYSEIQQLLKCVSESGMAATSDGDTILLNCLEAFKRIPPQELEGLIQAIHSDDNKVQAYLTCCKLRSAYLIAVKQEHSRATVLVQQVQQAAKSSGDAVVQDICAQWLLTSHTRGSHGSGSRK.

At Ser-297 the chain carries Phosphoserine. Disordered stretches follow at residues 523 to 545 (ECRD…SLSS), 609 to 636 (GLLG…GCQE), 699 to 722 (LSSH…SRDG), and 744 to 820 (VTSN…GRLQ). Phosphoserine is present on residues Ser-615, Ser-619, and Ser-703. The segment covering 699-710 (LSSHSPPEKPKL) has biased composition (basic and acidic residues). Residues 767 to 776 (SLRRGRRTRR) are compositionally biased toward basic residues. Positions 786 to 806 (SNPSLESTSSELSTSTSEGSL) are enriched in low complexity. Ser-802 carries the phosphoserine modification. Residues 870 to 897 (MFMERYQEVIQELSRVEHKIENQNSDGG) are a coiled coil. A disordered region spans residues 1272 to 1299 (LSTLSSPKPTGNSTLERKPHSSPRDSSL). Residues 1273–1285 (STLSSPKPTGNST) are compositionally biased toward polar residues. Ser-1744, Ser-1765, Ser-1784, and Ser-1786 each carry phosphoserine. The segment at 1780–1812 (STIHSPSPRERSFPESQPPPEFVPPATPPGRPQ) is disordered. Positions 1795-1810 (SQPPPEFVPPATPPGR) are enriched in pro residues. Residues 1816–1876 (DESASICMVC…VCDQCYSYYN (61 aa)) form an FYVE-type zinc finger. Residues Cys-1822, Cys-1825, Cys-1839, Cys-1842, Cys-1847, Cys-1850, Cys-1868, and Cys-1871 each contribute to the Zn(2+) site.

It belongs to the ZFYVE26 family. In terms of assembly, interacts with AP5Z1, AP5B1, AP5S1 and SPG11. Interacts with TTC19 and KIF13A.

The protein resides in the cytoplasm. Its subcellular location is the cytoskeleton. It is found in the microtubule organizing center. The protein localises to the centrosome. It localises to the midbody. Functionally, phosphatidylinositol 3-phosphate-binding protein required for the abscission step in cytokinesis: recruited to the midbody during cytokinesis and acts as a regulator of abscission. May also be required for efficient homologous recombination DNA double-strand break repair. This chain is Zinc finger FYVE domain-containing protein 26 (ZFYVE26), found in Ailuropoda melanoleuca (Giant panda).